Reading from the N-terminus, the 265-residue chain is Putative Tubby-like protein 4 (265 aa).

In terms of domain architecture, F-box spans 1 to 44; it reads MPPELLRDVLMRIERSEDTWPSRKNVVSCVGVCKNWRQIFKEIV. In terms of domain architecture, FBD spans 228–250; sequence SYELKLALYFAKNSAILKKFVLR.

This sequence belongs to the TUB family.

This chain is Putative Tubby-like protein 4, found in Arabidopsis thaliana (Mouse-ear cress).